Consider the following 389-residue polypeptide: Type 2 DNA topoisomerase 6 subunit A (389 aa).

Positions 12–162 (EARRKAANIL…MLILSKEKGK (151 aa)) constitute a Topo IIA-type catalytic domain. The active-site O-(5'-phospho-DNA)-tyrosine intermediate is Y106. Residues E209 and D261 each contribute to the Mg(2+) site.

Belongs to the TOP6A family. Homodimer. Heterotetramer of two Top6A and two Top6B chains. Mg(2+) serves as cofactor.

The enzyme catalyses ATP-dependent breakage, passage and rejoining of double-stranded DNA.. With respect to regulation, not inhibited by the DNA gyrase inhibitor novobiocin, instead inhibited by eukaryotic topoisomerase inhibitors such as m- and o-amsacrine, ellipticine, and the quinolone CP-115,953. Functionally, relaxes both positive and negative supercoils and exhibits a strong decatenase and unknotting activity; it cannot introduce DNA supercoils. ATP is absolutely required for DNA cleavage; the nonhydrolyzable analog AMP-PNP generates nicked or linear products from a supercoiled dsDNA substrate. Generates staggered two-nucleotide long 5' overhangs. The enzyme is covalently attached transiently to the 5'-ends of the cleaved strands. The sequence is that of Type 2 DNA topoisomerase 6 subunit A from Saccharolobus shibatae (strain ATCC 51178 / DSM 5389 / JCM 8931 / NBRC 15437 / B12) (Sulfolobus shibatae).